The sequence spans 427 residues: Trigger factor (427 aa).

Residues Gly163–Pro248 form the PPIase FKBP-type domain.

This sequence belongs to the FKBP-type PPIase family. Tig subfamily.

It is found in the cytoplasm. The enzyme catalyses [protein]-peptidylproline (omega=180) = [protein]-peptidylproline (omega=0). Functionally, involved in protein export. Acts as a chaperone by maintaining the newly synthesized protein in an open conformation. Functions as a peptidyl-prolyl cis-trans isomerase. The protein is Trigger factor of Streptococcus pneumoniae (strain CGSP14).